The chain runs to 307 residues: Dihydroorotate dehydrogenase A (fumarate) (307 aa).

Residues S21 and 46-47 (KT) each bind FMN. Residues K46, 70–74 (NSVGL), and N130 contribute to the substrate site. N130 is a binding site for FMN. The active-site Nucleophile is C133. 2 residues coordinate FMN: K168 and I194. 195–196 (NT) contributes to the substrate binding site. Residues G220, 246 to 247 (GG), and 268 to 269 (GS) contribute to the FMN site.

This sequence belongs to the dihydroorotate dehydrogenase family. Type 1 subfamily. As to quaternary structure, homodimer. It depends on FMN as a cofactor.

The protein resides in the cytoplasm. It carries out the reaction (S)-dihydroorotate + fumarate = orotate + succinate. Its pathway is pyrimidine metabolism; UMP biosynthesis via de novo pathway. Its function is as follows. Catalyzes the conversion of dihydroorotate to orotate with fumarate as the electron acceptor. In Lactobacillus helveticus (strain DPC 4571), this protein is Dihydroorotate dehydrogenase A (fumarate) (pyrD).